Reading from the N-terminus, the 456-residue chain is tRNA modification GTPase MnmE (456 aa).

Positions 29, 87, and 126 each coordinate (6S)-5-formyl-5,6,7,8-tetrahydrofolate. In terms of domain architecture, TrmE-type G spans 222–380 (GYKLAIIGRP…LLSLLASWLD (159 aa)). Asn-232 contacts K(+). GTP is bound by residues 232–237 (NVGKSS), 251–257 (SDIPGTT), and 276–279 (DTAG). Ser-236 lines the Mg(2+) pocket. Residues Ser-251, Ile-253, and Thr-256 each coordinate K(+). Thr-257 contributes to the Mg(2+) binding site. Lys-456 is a (6S)-5-formyl-5,6,7,8-tetrahydrofolate binding site.

The protein belongs to the TRAFAC class TrmE-Era-EngA-EngB-Septin-like GTPase superfamily. TrmE GTPase family. In terms of assembly, homodimer. Heterotetramer of two MnmE and two MnmG subunits. K(+) serves as cofactor.

It localises to the cytoplasm. Exhibits a very high intrinsic GTPase hydrolysis rate. Involved in the addition of a carboxymethylaminomethyl (cmnm) group at the wobble position (U34) of certain tRNAs, forming tRNA-cmnm(5)s(2)U34. This is tRNA modification GTPase MnmE from Wolinella succinogenes (strain ATCC 29543 / DSM 1740 / CCUG 13145 / JCM 31913 / LMG 7466 / NCTC 11488 / FDC 602W) (Vibrio succinogenes).